We begin with the raw amino-acid sequence, 211 residues long: Probable nicotinate-nucleotide adenylyltransferase (211 aa).

Belongs to the NadD family.

It catalyses the reaction nicotinate beta-D-ribonucleotide + ATP + H(+) = deamido-NAD(+) + diphosphate. It functions in the pathway cofactor biosynthesis; NAD(+) biosynthesis; deamido-NAD(+) from nicotinate D-ribonucleotide: step 1/1. Catalyzes the reversible adenylation of nicotinate mononucleotide (NaMN) to nicotinic acid adenine dinucleotide (NaAD). The protein is Probable nicotinate-nucleotide adenylyltransferase of Legionella pneumophila (strain Lens).